The following is a 66-amino-acid chain: Large ribosomal subunit protein bL33c (66 aa).

Belongs to the bacterial ribosomal protein bL33 family.

The protein resides in the plastid. It is found in the chloroplast. The chain is Large ribosomal subunit protein bL33c from Manihot esculenta (Cassava).